We begin with the raw amino-acid sequence, 237 residues long: Ribonuclease 3 (237 aa).

Positions 4–130 (IQILFQTLNI…LFGAIYLDLG (127 aa)) constitute an RNase III domain. Residue glutamate 45 coordinates Mg(2+). Aspartate 49 is a catalytic residue. Residues aspartate 116 and glutamate 119 each contribute to the Mg(2+) site. The active site involves glutamate 119. The region spanning 154–222 (DFKTQLQEIV…AQQALSKVAK (69 aa)) is the DRBM domain.

Belongs to the ribonuclease III family. Homodimer. Requires Mg(2+) as cofactor.

It is found in the cytoplasm. The catalysed reaction is Endonucleolytic cleavage to 5'-phosphomonoester.. Functionally, digests double-stranded RNA. Involved in the processing of primary rRNA transcript to yield the immediate precursors to the large and small rRNAs (23S and 16S). Processes some mRNAs, and tRNAs when they are encoded in the rRNA operon. Processes pre-crRNA and tracrRNA of type II CRISPR loci if present in the organism. The sequence is that of Ribonuclease 3 from Aster yellows witches'-broom phytoplasma (strain AYWB).